A 644-amino-acid polypeptide reads, in one-letter code: 1-deoxy-D-xylulose-5-phosphate synthase (644 aa).

Residues His-72 and 113-115 contribute to the thiamine diphosphate site; that span reads GHA. Asp-144 contacts Mg(2+). Thiamine diphosphate contacts are provided by residues 145 to 146, Asn-174, Tyr-287, and Glu-370; that span reads GA. Position 174 (Asn-174) interacts with Mg(2+).

The protein belongs to the transketolase family. DXPS subfamily. As to quaternary structure, homodimer. It depends on Mg(2+) as a cofactor. Requires thiamine diphosphate as cofactor.

It catalyses the reaction D-glyceraldehyde 3-phosphate + pyruvate + H(+) = 1-deoxy-D-xylulose 5-phosphate + CO2. Its pathway is metabolic intermediate biosynthesis; 1-deoxy-D-xylulose 5-phosphate biosynthesis; 1-deoxy-D-xylulose 5-phosphate from D-glyceraldehyde 3-phosphate and pyruvate: step 1/1. Its function is as follows. Catalyzes the acyloin condensation reaction between C atoms 2 and 3 of pyruvate and glyceraldehyde 3-phosphate to yield 1-deoxy-D-xylulose-5-phosphate (DXP). This chain is 1-deoxy-D-xylulose-5-phosphate synthase, found in Prochlorococcus marinus (strain MIT 9303).